The primary structure comprises 311 residues: Putative F-box protein At1g31090 (311 aa).

The 50-residue stretch at 4 to 53 folds into the F-box domain; the sequence is GANSDSIPTDLIYEILSRLSVKPITRFRCVSKLWESIICRQDFTELFHNR. The interval 287–311 is disordered; sequence RPAEQNTSTSSREDHLVRTVKRKRA.

This chain is Putative F-box protein At1g31090, found in Arabidopsis thaliana (Mouse-ear cress).